We begin with the raw amino-acid sequence, 355 residues long: Protein-glutamate methylesterase/protein-glutamine glutaminase 3 (355 aa).

Residues 8-123 (SVLIVDDSGM…AREVEDFVDK (116 aa)) enclose the Response regulatory domain. D59 carries the post-translational modification 4-aspartylphosphate. Positions 139–161 (RSAPAAGPTPVPQAPPPPAAPPA) are disordered. Pro residues predominate over residues 145 to 159 (GPTPVPQAPPPPAAP). Residues 160–350 (PAGDGGIIAI…ASLLEITGAS (191 aa)) form the CheB-type methylesterase domain. Active-site residues include S172, H199, and D292.

The protein belongs to the CheB family. Post-translationally, phosphorylated by CheA. Phosphorylation of the N-terminal regulatory domain activates the methylesterase activity.

The protein localises to the cytoplasm. The catalysed reaction is [protein]-L-glutamate 5-O-methyl ester + H2O = L-glutamyl-[protein] + methanol + H(+). The enzyme catalyses L-glutaminyl-[protein] + H2O = L-glutamyl-[protein] + NH4(+). Its function is as follows. Involved in chemotaxis. Part of a chemotaxis signal transduction system that modulates chemotaxis in response to various stimuli. Catalyzes the demethylation of specific methylglutamate residues introduced into the chemoreceptors (methyl-accepting chemotaxis proteins or MCP) by CheR. Also mediates the irreversible deamidation of specific glutamine residues to glutamic acid. The polypeptide is Protein-glutamate methylesterase/protein-glutamine glutaminase 3 (Paramagnetospirillum magneticum (strain ATCC 700264 / AMB-1) (Magnetospirillum magneticum)).